The chain runs to 156 residues: MALEKSLVRLLLLVLILLVLGWVQPSLGKESRAKKFQRQHMDSDSSPSSSSTYCNQMMRRRNMTQGRCKPVNTFVHEPLVDVQNVCFQEKVTCKNGQGNCYKSNSSMHITDCRLTNGSRYPNCAYRTSPKERHIIVACEGSPYVPVHFDASVEDST.

The first 28 residues, 1–28 (MALEKSLVRLLLLVLILLVLGWVQPSLG), serve as a signal peptide directing secretion. A compositionally biased stretch (basic and acidic residues) spans 33 to 43 (AKKFQRQHMDS). The interval 33 to 53 (AKKFQRQHMDSDSSPSSSSTY) is disordered. Positions 35 and 38 each coordinate substrate. His-40 (proton acceptor) is an active-site residue. Intrachain disulfides connect Cys-54–Cys-112, Cys-68–Cys-123, Cys-86–Cys-138, and Cys-93–Cys-100. An N-linked (GlcNAc...) asparagine; partial glycan is attached at Asn-62. Substrate contacts are provided by residues 69–73 (KPVNT) and Lys-94. Asn-104 carries an N-linked (GlcNAc...) asparagine glycan. Arg-113 serves as a coordination point for substrate. Asn-116 is a glycosylation site (N-linked (GlcNAc...) asparagine). The active-site Proton donor is the His-147.

It belongs to the pancreatic ribonuclease family. In terms of assembly, monomer. Interacts with and forms tight 1:1 complexes with RNH1. Dimerization of two such complexes may occur. Interaction with RNH1 inhibits this protein. Post-translationally, N-linked glycans are of complex type. Pancreas and other tissues and body fluids (indicating it may have other physiological functions besides its role in digestion).

Its subcellular location is the secreted. It catalyses the reaction an [RNA] containing cytidine + H2O = an [RNA]-3'-cytidine-3'-phosphate + a 5'-hydroxy-ribonucleotide-3'-[RNA].. The enzyme catalyses an [RNA] containing uridine + H2O = an [RNA]-3'-uridine-3'-phosphate + a 5'-hydroxy-ribonucleotide-3'-[RNA].. In terms of biological role, endonuclease that catalyzes the cleavage of RNA on the 3' side of pyrimidine nucleotides. Acts on single-stranded and double-stranded RNA. In Homo sapiens (Human), this protein is Ribonuclease pancreatic (RNASE1).